The chain runs to 302 residues: Arginase (302 aa).

Residues His-103, Asp-126, His-128, and Asp-130 each coordinate Mn(2+). Substrate-binding positions include 128-132 (HGDLN), 139-141 (SGN), and Asp-180. Mn(2+) is bound by residues Asp-229 and Asp-231. Substrate-binding residues include Thr-243 and Glu-274.

It belongs to the arginase family. Mn(2+) serves as cofactor.

The enzyme catalyses L-arginine + H2O = urea + L-ornithine. It functions in the pathway nitrogen metabolism; urea cycle; L-ornithine and urea from L-arginine: step 1/1. The polypeptide is Arginase (arg) (Staphylococcus aureus (strain MRSA252)).